Here is a 218-residue protein sequence, read N- to C-terminus: Putative tRNA methyltransferase MG248 (218 aa).

It belongs to the TrmK family.

It localises to the cytoplasm. The protein is Putative tRNA methyltransferase MG248 of Mycoplasma genitalium (strain ATCC 33530 / DSM 19775 / NCTC 10195 / G37) (Mycoplasmoides genitalium).